Reading from the N-terminus, the 199-residue chain is Cytochrome c oxidase subunit 2 (199 aa).

Residues 1 to 13 form a helical membrane-spanning segment; it reads AICSLVLYLLTLM. Residues 14–26 lie on the Mitochondrial matrix side of the membrane; the sequence is LMEKLSSNSVDAQ. The chain crosses the membrane as a helical span at residues 27-54; that stretch reads EVELVWTILPAIVLILLALPSLQILYMM. The Mitochondrial intermembrane portion of the chain corresponds to 55 to 199; sequence DEIDEPDLTL…SSLLSTSSSL (145 aa). The Cu cation site is built by His128, Cys163, Glu165, Cys167, His171, and Met174. Glu165 contacts Mg(2+).

Belongs to the cytochrome c oxidase subunit 2 family. Component of the cytochrome c oxidase (complex IV, CIV), a multisubunit enzyme composed of 14 subunits. The complex is composed of a catalytic core of 3 subunits MT-CO1, MT-CO2 and MT-CO3, encoded in the mitochondrial DNA, and 11 supernumerary subunits COX4I, COX5A, COX5B, COX6A, COX6B, COX6C, COX7A, COX7B, COX7C, COX8 and NDUFA4, which are encoded in the nuclear genome. The complex exists as a monomer or a dimer and forms supercomplexes (SCs) in the inner mitochondrial membrane with NADH-ubiquinone oxidoreductase (complex I, CI) and ubiquinol-cytochrome c oxidoreductase (cytochrome b-c1 complex, complex III, CIII), resulting in different assemblies (supercomplex SCI(1)III(2)IV(1) and megacomplex MCI(2)III(2)IV(2)). Found in a complex with TMEM177, COA6, COX18, COX20, SCO1 and SCO2. Interacts with TMEM177 in a COX20-dependent manner. Interacts with COX20. Interacts with COX16. Cu cation is required as a cofactor.

Its subcellular location is the mitochondrion inner membrane. The catalysed reaction is 4 Fe(II)-[cytochrome c] + O2 + 8 H(+)(in) = 4 Fe(III)-[cytochrome c] + 2 H2O + 4 H(+)(out). Its function is as follows. Component of the cytochrome c oxidase, the last enzyme in the mitochondrial electron transport chain which drives oxidative phosphorylation. The respiratory chain contains 3 multisubunit complexes succinate dehydrogenase (complex II, CII), ubiquinol-cytochrome c oxidoreductase (cytochrome b-c1 complex, complex III, CIII) and cytochrome c oxidase (complex IV, CIV), that cooperate to transfer electrons derived from NADH and succinate to molecular oxygen, creating an electrochemical gradient over the inner membrane that drives transmembrane transport and the ATP synthase. Cytochrome c oxidase is the component of the respiratory chain that catalyzes the reduction of oxygen to water. Electrons originating from reduced cytochrome c in the intermembrane space (IMS) are transferred via the dinuclear copper A center (CU(A)) of subunit 2 and heme A of subunit 1 to the active site in subunit 1, a binuclear center (BNC) formed by heme A3 and copper B (CU(B)). The BNC reduces molecular oxygen to 2 water molecules using 4 electrons from cytochrome c in the IMS and 4 protons from the mitochondrial matrix. The chain is Cytochrome c oxidase subunit 2 (MT-CO2) from Apteryx australis (Southern brown kiwi).